Reading from the N-terminus, the 109-residue chain is Large ribosomal subunit protein uL24 (109 aa).

The protein belongs to the universal ribosomal protein uL24 family. Part of the 50S ribosomal subunit.

Its function is as follows. One of two assembly initiator proteins, it binds directly to the 5'-end of the 23S rRNA, where it nucleates assembly of the 50S subunit. One of the proteins that surrounds the polypeptide exit tunnel on the outside of the subunit. This is Large ribosomal subunit protein uL24 from Geotalea uraniireducens (strain Rf4) (Geobacter uraniireducens).